The following is a 259-amino-acid chain: Protein odd-skipped-related 1 (259 aa).

C2H2-type zinc fingers lie at residues 168–190, 196–218, and 224–246; these read FVCKFCGRHFTKSYNLLIHERTH, YTCDICHKAFRRQDHLRDHRYIH, and FKCQECGKGFCQSRTLAVHKTLH.

It belongs to the Odd C2H2-type zinc-finger protein family. As to expression, at early gastrula stage, expressed in the involuting mesoderm and endoderm. During neurulation, expressed in the pronephric primordium, following expression of osr2. During tailbud (stage 35), expressed in the rectal diverticulum and in the kidney ducts.

Its subcellular location is the nucleus. Its function is as follows. Transcriptional repressor. Required for pronephric kidney development. This Xenopus laevis (African clawed frog) protein is Protein odd-skipped-related 1.